The chain runs to 473 residues: tRNA modification GTPase MnmE (473 aa).

The (6S)-5-formyl-5,6,7,8-tetrahydrofolate site is built by arginine 30, glutamate 95, and arginine 134. Positions 230 to 394 (GVAAVIAGRP…LKSTMAGMVE (165 aa)) constitute a TrmE-type G domain. Residues 240-245 (NAGKST), 259-265 (SHMPGTT), and 284-287 (DTAG) contribute to the GTP site. Residues serine 244 and threonine 265 each contribute to the Mg(2+) site. Lysine 473 serves as a coordination point for (6S)-5-formyl-5,6,7,8-tetrahydrofolate.

Belongs to the TRAFAC class TrmE-Era-EngA-EngB-Septin-like GTPase superfamily. TrmE GTPase family. As to quaternary structure, homodimer. Heterotetramer of two MnmE and two MnmG subunits. It depends on K(+) as a cofactor.

It localises to the cytoplasm. Exhibits a very high intrinsic GTPase hydrolysis rate. Involved in the addition of a carboxymethylaminomethyl (cmnm) group at the wobble position (U34) of certain tRNAs, forming tRNA-cmnm(5)s(2)U34. The sequence is that of tRNA modification GTPase MnmE from Chlorobium phaeovibrioides (strain DSM 265 / 1930) (Prosthecochloris vibrioformis (strain DSM 265)).